We begin with the raw amino-acid sequence, 209 residues long: Ribonuclease HII (209 aa).

The region spanning 19-208 (GLVAGVDEAG…VARALQAPVA (190 aa)) is the RNase H type-2 domain. A divalent metal cation is bound by residues Asp25, Glu26, and Asp117.

This sequence belongs to the RNase HII family. The cofactor is Mn(2+). Requires Mg(2+) as cofactor.

Its subcellular location is the cytoplasm. The enzyme catalyses Endonucleolytic cleavage to 5'-phosphomonoester.. Its function is as follows. Endonuclease that specifically degrades the RNA of RNA-DNA hybrids. The chain is Ribonuclease HII from Acidovorax ebreus (strain TPSY) (Diaphorobacter sp. (strain TPSY)).